We begin with the raw amino-acid sequence, 153 residues long: Peritrophin-1 (153 aa).

Positions Met-1–Ala-17 are cleaved as a signal peptide. 2 Chitin-binding type-2 domains span residues Asp-18–Pro-79 and Ser-92–Glu-153. Disulfide bonds link Cys-56–Cys-69 and Cys-130–Cys-143. A glycan (N-linked (GlcNAc...) asparagine) is linked at Asn-63.

Glycosylated. In terms of tissue distribution, adult peritrophic membrane.

In terms of biological role, binds chitin but not cellulose. May be involved in the spatial organization of PM. This is Peritrophin-1 (Aper1) from Anopheles gambiae (African malaria mosquito).